The sequence spans 70 residues: Small ribosomal subunit protein bS21 (70 aa).

Belongs to the bacterial ribosomal protein bS21 family.

This is Small ribosomal subunit protein bS21 from Methylobacillus flagellatus (strain ATCC 51484 / DSM 6875 / VKM B-1610 / KT).